The primary structure comprises 478 residues: UDP-glycosyltransferase 90A1 (478 aa).

UDP-alpha-D-glucose contacts are provided by residues threonine 289, 343-345 (VDQ), 360-368 (HCGWNSAQE), and 382-385 (MAEQ).

The protein belongs to the UDP-glycosyltransferase family.

The sequence is that of UDP-glycosyltransferase 90A1 (UGT90A1) from Arabidopsis thaliana (Mouse-ear cress).